Reading from the N-terminus, the 221-residue chain is Germin-like protein subfamily 1 member 15 (221 aa).

A signal peptide spans 1-21; that stretch reads MKVSMSLILITFWALVTIAKA. A disulfide bridge connects residues Cys-31 and Cys-48. Positions 62–213 constitute a Cupin type-1 domain; it reads SGLNQAGITN…AFQLDVNVVK (152 aa). Asn-77 is a glycosylation site (N-linked (GlcNAc...) asparagine). 4 residues coordinate Mn(2+): His-110, His-112, Glu-117, and His-159.

The protein belongs to the germin family. In terms of assembly, oligomer (believed to be a pentamer but probably hexamer).

The protein localises to the secreted. It localises to the extracellular space. It is found in the apoplast. In terms of biological role, may play a role in plant defense. Probably has no oxalate oxidase activity even if the active site is conserved. This chain is Germin-like protein subfamily 1 member 15, found in Arabidopsis thaliana (Mouse-ear cress).